The chain runs to 477 residues: E3 ubiquitin-protein ligase TRIM17 (477 aa).

The RING-type zinc finger occupies 16-66; sequence CSICLDYFTDPVMTACGHNFCRECIQMSWEKGKGKKGKKKQKGSFPCPECR. The segment at 94–135 adopts a B box-type zinc-finger fold; the sequence is HKRDLCQIHQEPLKLFCQDDQTPICVVCREAQEHRMHRVLPL. Positions 99, 102, 121, and 127 each coordinate Zn(2+). The stretch at 135 to 225 forms a coiled coil; sequence LDEAAREYKL…GKLQDSKASL (91 aa). The region spanning 276 to 475 is the B30.2/SPRY domain; the sequence is AIKTVCRVPG…MVISTVTMWV (200 aa).

It belongs to the TRIM/RBCC family. In terms of assembly, interacts (via coiled coil) with TRIM44 (via coiled coil). Interacts with TRIM28; this interaction prevents TRIM28 activity on BCL2A1. Interacts with TRIM41; this interaction prevents TRIM41 activity on ZSCAN2. Interacts with BECN1. Interacts with NFATC3 and NFATC4; these interactions prevent NFATC3 and NFATC4 nuclear localization. Post-translationally, auto-ubiquitinated. In terms of tissue distribution, expressed almost exclusively in the testis.

The protein resides in the cytoplasm. Its subcellular location is the lysosome. It catalyses the reaction S-ubiquitinyl-[E2 ubiquitin-conjugating enzyme]-L-cysteine + [acceptor protein]-L-lysine = [E2 ubiquitin-conjugating enzyme]-L-cysteine + N(6)-ubiquitinyl-[acceptor protein]-L-lysine.. The protein operates within protein modification; protein ubiquitination. Functionally, E3 ubiquitin ligase that plays important roles in the regulation of neuronal apoptosis, selective autophagy or cell proliferation. Stimulates the degradation of kinetochore ZW10 interacting protein ZWINT in a proteasome-dependent manner, leading to negative regulation of cell proliferation. Inhibits autophagic degradation of diverse known targets while contributing to autophagy of midbodies. Autophagy-inhibitory activity involves MCL1, which TRIM17 assembles into complexes with the key autophagy regulator BECN1. Controls neuronal apoptosis by mediating ubiquitination and degradation of MCL1 to initiate neuronal death. In addition, regulates NFAT transcription factors NFATC3 and NFATC4 activities by preventing their nuclear localization, thus inhibiting their transcriptional activities. Decreases TRIM41-mediated degradation of ZSCAN2 thereby stimulating alpha-synuclein/SNCA transcription in neuronal cells. Prevents the E3 ubiquitin-ligase activity of TRIM28 and its interaction with anti-apoptotic BCL2A1, blocking TRIM28 from ubiquitinating BCL2A1. This chain is E3 ubiquitin-protein ligase TRIM17 (Trim17), found in Rattus norvegicus (Rat).